Here is a 117-residue protein sequence, read N- to C-terminus: Large ribosomal subunit protein bL20c (117 aa).

The protein belongs to the bacterial ribosomal protein bL20 family.

It localises to the plastid. It is found in the chloroplast. Its function is as follows. Binds directly to 23S ribosomal RNA and is necessary for the in vitro assembly process of the 50S ribosomal subunit. It is not involved in the protein synthesizing functions of that subunit. The sequence is that of Large ribosomal subunit protein bL20c from Aethionema grandiflorum (Persian stone-cress).